A 144-amino-acid polypeptide reads, in one-letter code: Putative 2'-deoxynucleoside 5'-phosphate N-hydrolase 1 (144 aa).

Residues 7-13, Tyr22, His39, Glu83, and 107-109 each bind substrate; these read YFCGSIR and SGM.

Belongs to the 2'-deoxynucleoside 5'-phosphate N-hydrolase 1 family. Monomer and homodimer.

The protein resides in the cytoplasm. Its subcellular location is the nucleus. The enzyme catalyses a pyrimidine 2'-deoxyribonucleoside 5'-phosphate + H2O = a pyrimidine nucleobase + 2-deoxy-D-ribose 5-phosphate. The catalysed reaction is a purine 2'-deoxyribonucleoside 5'-phosphate + H2O = a purine nucleobase + 2-deoxy-D-ribose 5-phosphate. Its function is as follows. Catalyzes the cleavage of the N-glycosidic bond of deoxyribonucleoside 5'-monophosphates to yield deoxyribose 5-phosphate and a purine or pyrimidine base. The polypeptide is Putative 2'-deoxynucleoside 5'-phosphate N-hydrolase 1 (Trichoplax adhaerens (Trichoplax reptans)).